The sequence spans 335 residues: Protein MET1, chloroplastic (335 aa).

Residues 1–18 (MSLAPSSYPSLYSSPSLP) show a composition bias toward low complexity. Disordered stretches follow at residues 1 to 29 (MSLAPSSYPSLYSSPSLPRTQQTKQNPSL) and 66 to 88 (SETESSAKAEAGGDGEEEEKYET). Residues 1-73 (MSLAPSSYPS…KASETESSAK (73 aa)) constitute a chloroplast transit peptide. A compositionally biased stretch (polar residues) spans 19 to 29 (RTQQTKQNPSL). Residues 78 to 88 (GDGEEEEKYET) show a composition bias toward acidic residues. Positions 97 to 136 (YGLKFRKGRDGGTYIDAILPGGSADKTGKFTVGDRVIATS) constitute a PDZ domain. TPR repeat units lie at residues 217 to 250 (REKDLREGLQFSKNGKYEEALERFESVLGSKPTP), 254 to 287 (SVASYNVACCYSKLNQVQAGLSALEEALKSGYED), and 289 to 323 (KRIRSDPDLETLRKSKDFDPLLKQFDESFINESAI).

In terms of assembly, interacts directly with stromal loops of photosystem II (PSII) core components psbB (CP47) and psbC (CP43). Associates with PSII subcomplexes formed during the PSII repair cycle (e.g. PSII dimers, PSII monomers, CP43-less PSII monomerand PSII reaction centers). Phosphorylated rapidly (e.g. within 5 minutes) but transiently at threonine and serine residues after wounding. In terms of tissue distribution, expressed in leaves (at protein level). Mostly expressed in leaves, stems and siliques, and, to a lower extent, in flowers and senescent leaves, but not present in roots (at protein level).

The protein resides in the plastid. It is found in the chloroplast membrane. It localises to the chloroplast thylakoid membrane. Involved in photosystem II supercomplex formation and repair, probably acting as a psbB/psbC chaperone on the stromal side of the membrane. This is Protein MET1, chloroplastic from Arabidopsis thaliana (Mouse-ear cress).